The sequence spans 428 residues: UPF0761 membrane protein TERTU_3006 (428 aa).

7 helical membrane-spanning segments follow: residues 47–67 (LFAL…IPAF), 104–124 (LSGV…RNIE), 143–163 (YLLY…AFLL), 189–209 (VVPW…VPNC), 218–238 (IGGV…GYIV), 248–268 (GAFA…TIIL), and 292–312 (MIVV…GESV).

It belongs to the UPF0761 family.

Its subcellular location is the cell inner membrane. This Teredinibacter turnerae (strain ATCC 39867 / T7901) protein is UPF0761 membrane protein TERTU_3006.